We begin with the raw amino-acid sequence, 205 residues long: Imidazoleglycerol-phosphate dehydratase (205 aa).

It belongs to the imidazoleglycerol-phosphate dehydratase family.

The protein localises to the cytoplasm. The catalysed reaction is D-erythro-1-(imidazol-4-yl)glycerol 3-phosphate = 3-(imidazol-4-yl)-2-oxopropyl phosphate + H2O. It functions in the pathway amino-acid biosynthesis; L-histidine biosynthesis; L-histidine from 5-phospho-alpha-D-ribose 1-diphosphate: step 6/9. The protein is Imidazoleglycerol-phosphate dehydratase of Chloroflexus aurantiacus (strain ATCC 29366 / DSM 635 / J-10-fl).